The chain runs to 115 residues: NADH-ubiquinone oxidoreductase chain 3 (115 aa).

Helical transmembrane passes span 3–23 (LILM…IVAF), 56–76 (FFLV…LLPL), and 84–104 (PTLM…GLIY).

This sequence belongs to the complex I subunit 3 family.

It is found in the mitochondrion membrane. It carries out the reaction a ubiquinone + NADH + 5 H(+)(in) = a ubiquinol + NAD(+) + 4 H(+)(out). Core subunit of the mitochondrial membrane respiratory chain NADH dehydrogenase (Complex I) that is believed to belong to the minimal assembly required for catalysis. Complex I functions in the transfer of electrons from NADH to the respiratory chain. The immediate electron acceptor for the enzyme is believed to be ubiquinone. In Polypterus ornatipinnis (Ornate bichir), this protein is NADH-ubiquinone oxidoreductase chain 3 (MT-ND3).